The primary structure comprises 604 residues: Threonine--tRNA ligase (604 aa).

The catalytic stretch occupies residues 210-501; the sequence is DHRKIGTEME…LTEHYAGEFP (292 aa). Residues Cys-302, His-353, and His-478 each coordinate Zn(2+).

The protein belongs to the class-II aminoacyl-tRNA synthetase family. As to quaternary structure, homodimer. Zn(2+) is required as a cofactor.

The protein localises to the cytoplasm. The enzyme catalyses tRNA(Thr) + L-threonine + ATP = L-threonyl-tRNA(Thr) + AMP + diphosphate + H(+). Functionally, catalyzes the attachment of threonine to tRNA(Thr) in a two-step reaction: L-threonine is first activated by ATP to form Thr-AMP and then transferred to the acceptor end of tRNA(Thr). Also edits incorrectly charged L-seryl-tRNA(Thr). The sequence is that of Threonine--tRNA ligase from Sulfurovum sp. (strain NBC37-1).